The sequence spans 737 residues: MESGGGSSTPPGPIAALGMPDSGPGSSSLGKLQALPVGPRAHCGDPGSLAAAGDGSLDTGSTGELSGSLKIPNRDSGIDSPSSSVAGENFPCEEGLEAGPSPTVLGAHPEMALDSQVPKVTPREEADSDVGEEPDSENTPQKADKDAGLAQHSGPQKLLHIAQELLHTEETYVKRLHLLDQVFCTRLTDAGIPPEVIMGIFSNISSIHRFHGQFLLPELKTRITEEWDTNPRLGDILQKLAPFLKMYGEYVKNFDRAVGLVSTWTQRSPLFKDVVHSIQKQEVCGNLTLQHHMLEPVQRVPRYELLLKDYLKRLPQDAPDQKDAERSLELISTAANHSNAAIRKVEKMHKLLEVYEQLGGEEDIANPANELIKEGQIQKLSAKNGTPQDRHLFLFNSMILYCVPKLRLMGQKFSVREKMDISGLQVQDIVKPNTAHTFIITGRKRSLELQTRTEEEKKEWIQIIQATIEKHKQNSETFKAFGGAFSQDEDPSLSPDMPITSTSPVEPVVTTEGGSGAAGLEPRKLSSKTRRDKEKQSCKSCGETFNSITKRRHHCKLCGVVICGKCSEFKAENSRQSRVCRECFLTQPVAPESPSPEAPAKPRRSTEKTPTADPQPSLLCGPLRLSESGETWSEVWAAIPMSDPQVLHLQGGSQDGWLPRTIPLPSCKLSVPDPEERLDSGHVWKLQWAKQSWYLSASSAELQQRWLETLSTAARGDTAQDSPGALQPQVPTGAAAP.

The segment at 1–151 is disordered; the sequence is MESGGGSSTP…KADKDAGLAQ (151 aa). A compositionally biased stretch (acidic residues) spans 126-136; that stretch reads ADSDVGEEPDS. Residue Ser128 is modified to Phosphoserine. The region spanning 157-341 is the DH domain; the sequence is KLLHIAQELL…STAANHSNAA (185 aa). Positions 370 to 469 constitute a PH 1 domain; that stretch reads ELIKEGQIQK…WIQIIQATIE (100 aa). Positions 487–533 are disordered; the sequence is QDEDPSLSPDMPITSTSPVEPVVTTEGGSGAAGLEPRKLSSKTRRDK. Low complexity predominate over residues 500-512; it reads TSTSPVEPVVTTE. Basic and acidic residues predominate over residues 521–533; it reads EPRKLSSKTRRDK. The segment at 532-588 adopts an FYVE-type zinc-finger fold; that stretch reads DKEKQSCKSCGETFNSITKRRHHCKLCGVVICGKCSEFKAENSRQSRVCRECFLTQP. Residues Cys538, Cys541, Cys555, Cys558, Cys563, Cys566, Cys580, and Cys583 each coordinate Zn(2+). 2 disordered regions span residues 589–620 and 713–737; these read VAPE…SLLC and AARG…AAAP. Positions 616-715 constitute a PH 2 domain; it reads PSLLCGPLRL…WLETLSTAAR (100 aa).

It is found in the cytoplasm. It localises to the cytoskeleton. Its function is as follows. Promotes the formation of filopodia. May activate CDC42, a member of the Ras-like family of Rho- and Rac proteins, by exchanging bound GDP for free GTP. Plays a role in regulating the actin cytoskeleton and cell shape. This chain is FYVE, RhoGEF and PH domain-containing protein 3 (FGD3), found in Pongo abelii (Sumatran orangutan).